The sequence spans 254 residues: Cdc42 effector protein 3 (254 aa).

In terms of domain architecture, CRIB spans 31 to 45 (ISPPLGDFRHTIHIG). Tyr63 is subject to Phosphotyrosine. Ser89, Ser108, and Ser144 each carry phosphoserine. Residues 165 to 205 (VHQGDTSWGSSGSGSQSSQGRDSHSSSLSEQSSDWPADDMF) are disordered. The span at 171–197 (SWGSSGSGSQSSQGRDSHSSSLSEQSS) shows a compositional bias: low complexity.

The protein belongs to the BORG/CEP family. Interacts with RHOQ and CDC42, in a GTP-dependent manner, and with SEPT7.

It is found in the endomembrane system. Its subcellular location is the cytoplasm. The protein resides in the cytoskeleton. Its function is as follows. Probably involved in the organization of the actin cytoskeleton. May act downstream of CDC42 to induce actin filament assembly leading to cell shape changes. Induces pseudopodia formation in fibroblasts. This is Cdc42 effector protein 3 (Cdc42ep3) from Mus musculus (Mouse).